Here is a 208-residue protein sequence, read N- to C-terminus: Large ribosomal subunit protein uL4 (208 aa).

The disordered stretch occupies residues 47–84; that stretch reads ARAARERSDVARTGKKFGRQKGGGTARHGDRRAPVFIG. The segment covering 49–58 has biased composition (basic and acidic residues); sequence AARERSDVAR.

This sequence belongs to the universal ribosomal protein uL4 family. As to quaternary structure, part of the 50S ribosomal subunit.

Functionally, one of the primary rRNA binding proteins, this protein initially binds near the 5'-end of the 23S rRNA. It is important during the early stages of 50S assembly. It makes multiple contacts with different domains of the 23S rRNA in the assembled 50S subunit and ribosome. In terms of biological role, forms part of the polypeptide exit tunnel. This chain is Large ribosomal subunit protein uL4, found in Rhizorhabdus wittichii (strain DSM 6014 / CCUG 31198 / JCM 15750 / NBRC 105917 / EY 4224 / RW1) (Sphingomonas wittichii).